The sequence spans 210 residues: Na(+)-translocating NADH-quinone reductase subunit D (210 aa).

Transmembrane regions (helical) follow at residues Pro-14–Val-34, Leu-42–Ile-62, Ile-72–Ala-92, Val-103–Met-123, Phe-131–Val-151, and Asn-178–Ile-198.

This sequence belongs to the NqrDE/RnfAE family. Composed of six subunits; NqrA, NqrB, NqrC, NqrD, NqrE and NqrF.

The protein resides in the cell inner membrane. The enzyme catalyses a ubiquinone + n Na(+)(in) + NADH + H(+) = a ubiquinol + n Na(+)(out) + NAD(+). NQR complex catalyzes the reduction of ubiquinone-1 to ubiquinol by two successive reactions, coupled with the transport of Na(+) ions from the cytoplasm to the periplasm. NqrA to NqrE are probably involved in the second step, the conversion of ubisemiquinone to ubiquinol. The polypeptide is Na(+)-translocating NADH-quinone reductase subunit D (Shewanella putrefaciens (strain CN-32 / ATCC BAA-453)).